The sequence spans 478 residues: Glutamate-1-semialdehyde 2,1-aminomutase, chloroplastic (478 aa).

The transit peptide at 1–40 directs the protein to the chloroplast; the sequence is MAGAAAASAAAAAVASGISARPVAPRPSPSRARAPRSVVR. A disordered region spans residues 15-36; sequence ASGISARPVAPRPSPSRARAPR. K318 is subject to N6-(pyridoxal phosphate)lysine.

It belongs to the class-III pyridoxal-phosphate-dependent aminotransferase family. HemL subfamily. Homodimer. The cofactor is pyridoxal 5'-phosphate.

The protein resides in the plastid. Its subcellular location is the chloroplast. The enzyme catalyses (S)-4-amino-5-oxopentanoate = 5-aminolevulinate. Its pathway is porphyrin-containing compound metabolism; protoporphyrin-IX biosynthesis; 5-aminolevulinate from L-glutamyl-tRNA(Glu): step 2/2. The protein operates within porphyrin-containing compound metabolism; chlorophyll biosynthesis. This Oryza sativa subsp. japonica (Rice) protein is Glutamate-1-semialdehyde 2,1-aminomutase, chloroplastic (GSA).